The following is a 556-amino-acid chain: Oxygen-dependent choline dehydrogenase (556 aa).

4-33 contacts FAD; the sequence is DYIIIGAGSAGNVLATRLTEDPNTTVLLLE. The Proton acceptor role is filled by H473.

This sequence belongs to the GMC oxidoreductase family. It depends on FAD as a cofactor.

The protein localises to the cell membrane. It carries out the reaction choline + A = betaine aldehyde + AH2. It catalyses the reaction betaine aldehyde + NAD(+) + H2O = glycine betaine + NADH + 2 H(+). Its pathway is amine and polyamine biosynthesis; betaine biosynthesis via choline pathway; betaine aldehyde from choline (cytochrome c reductase route): step 1/1. Functionally, involved in the biosynthesis of the osmoprotectant glycine betaine. Catalyzes the oxidation of choline to betaine aldehyde and betaine aldehyde to glycine betaine at the same rate. The polypeptide is Oxygen-dependent choline dehydrogenase (Escherichia coli O6:H1 (strain CFT073 / ATCC 700928 / UPEC)).